A 329-amino-acid chain; its full sequence is Glutamyl-Q tRNA(Asp) synthetase (329 aa).

Residues 8–12 (RLAPS) and Glu44 each bind L-glutamate. Residues 11–21 (PSPTGAQHLGN) carry the 'HIGH' region motif. Zn(2+) is bound by residues Cys100, Cys102, Tyr129, and Cys133. The L-glutamate site is built by Tyr196 and Arg214. The short motif at 252–256 (RLAKR) is the 'KMSKS' region element. Lys255 serves as a coordination point for ATP.

This sequence belongs to the class-I aminoacyl-tRNA synthetase family. GluQ subfamily. The cofactor is Zn(2+).

Functionally, catalyzes the tRNA-independent activation of glutamate in presence of ATP and the subsequent transfer of glutamate onto a tRNA(Asp). Glutamate is transferred on the 2-amino-5-(4,5-dihydroxy-2-cyclopenten-1-yl) moiety of the queuosine in the wobble position of the QUC anticodon. In Rhodopirellula baltica (strain DSM 10527 / NCIMB 13988 / SH1), this protein is Glutamyl-Q tRNA(Asp) synthetase.